Here is a 291-residue protein sequence, read N- to C-terminus: Elongation factor Ts (291 aa).

The segment at 78–81 (TDFV) is involved in Mg(2+) ion dislocation from EF-Tu.

It belongs to the EF-Ts family.

The protein resides in the cytoplasm. Associates with the EF-Tu.GDP complex and induces the exchange of GDP to GTP. It remains bound to the aminoacyl-tRNA.EF-Tu.GTP complex up to the GTP hydrolysis stage on the ribosome. This chain is Elongation factor Ts, found in Ureaplasma urealyticum serovar 10 (strain ATCC 33699 / Western).